The chain runs to 869 residues: Translation initiation factor IF-2 (869 aa).

Disordered regions lie at residues 51–78 (KQHGGTGSEAPKRMTLQRKTTSTLNMGK) and 105–277 (EEET…SDLK). Over residues 67–76 (QRKTTSTLNM) the composition is skewed to polar residues. The span at 110-119 (RALAEQQAQL) shows a compositional bias: low complexity. Over residues 120 to 241 (EAEKAAAEEA…KKQEAEEVHV (122 aa)) the composition is skewed to basic and acidic residues. The tr-type G domain maps to 369 to 542 (SRAPVVTIMG…ELLDLKAPPT (174 aa)). The interval 378–385 (GHVDHGKT) is G1. 378–385 (GHVDHGKT) provides a ligand contact to GTP. The interval 403–407 (GITQH) is G2. A G3 region spans residues 424–427 (DTPG). GTP contacts are provided by residues 424–428 (DTPGH) and 478–481 (NKMD). The tract at residues 478–481 (NKMD) is G4. Residues 514 to 516 (SAK) form a G5 region.

This sequence belongs to the TRAFAC class translation factor GTPase superfamily. Classic translation factor GTPase family. IF-2 subfamily.

It localises to the cytoplasm. In terms of biological role, one of the essential components for the initiation of protein synthesis. Protects formylmethionyl-tRNA from spontaneous hydrolysis and promotes its binding to the 30S ribosomal subunits. Also involved in the hydrolysis of GTP during the formation of the 70S ribosomal complex. This is Translation initiation factor IF-2 from Pseudoalteromonas atlantica (strain T6c / ATCC BAA-1087).